Consider the following 468-residue polypeptide: Argininosuccinate lyase (468 aa).

Belongs to the lyase 1 family. Argininosuccinate lyase subfamily.

Its subcellular location is the cytoplasm. It catalyses the reaction 2-(N(omega)-L-arginino)succinate = fumarate + L-arginine. The protein operates within amino-acid biosynthesis; L-arginine biosynthesis; L-arginine from L-ornithine and carbamoyl phosphate: step 3/3. In Paraburkholderia phymatum (strain DSM 17167 / CIP 108236 / LMG 21445 / STM815) (Burkholderia phymatum), this protein is Argininosuccinate lyase.